The following is a 333-amino-acid chain: DNA-directed RNA polymerase subunit alpha (333 aa).

An alpha N-terminal domain (alpha-NTD) region spans residues 1–234 (MQISVNEFLT…QQLAAFVDLK (234 aa)). The segment at 248-333 (IDPILLRPVD…SLKKDDKATA (86 aa)) is alpha C-terminal domain (alpha-CTD).

This sequence belongs to the RNA polymerase alpha chain family. Homodimer. The RNAP catalytic core consists of 2 alpha, 1 beta, 1 beta' and 1 omega subunit. When a sigma factor is associated with the core the holoenzyme is formed, which can initiate transcription.

It carries out the reaction RNA(n) + a ribonucleoside 5'-triphosphate = RNA(n+1) + diphosphate. DNA-dependent RNA polymerase catalyzes the transcription of DNA into RNA using the four ribonucleoside triphosphates as substrates. The polypeptide is DNA-directed RNA polymerase subunit alpha (Pseudomonas entomophila (strain L48)).